A 213-amino-acid polypeptide reads, in one-letter code: Large ribosomal subunit protein uL4 (213 aa).

A disordered region spans residues 41-75 (GTASTKTRAEVSRSGKKMYSQKGTGNARHGDRSVP).

It belongs to the universal ribosomal protein uL4 family. As to quaternary structure, part of the 50S ribosomal subunit.

Its function is as follows. One of the primary rRNA binding proteins, this protein initially binds near the 5'-end of the 23S rRNA. It is important during the early stages of 50S assembly. It makes multiple contacts with different domains of the 23S rRNA in the assembled 50S subunit and ribosome. Forms part of the polypeptide exit tunnel. In Deinococcus geothermalis (strain DSM 11300 / CIP 105573 / AG-3a), this protein is Large ribosomal subunit protein uL4.